A 466-amino-acid chain; its full sequence is NADH-quinone oxidoreductase subunit N (466 aa).

Transmembrane regions (helical) follow at residues 9 to 29 (LIPLLILACGSVFVLMLGAIV), 33 to 53 (CGTVIGVAVCAGTALWAMLAP), 68 to 88 (PFTRFFLVFFAVTAGLSLLLA), 100 to 120 (EEYPATILFGTFGMGVVASAA), 122 to 142 (FLTLFLGLEALTFAFYILVAY), 157 to 177 (LLMGAVSAAFVAFGIALLYGA), 190 to 210 (SAAGGGIALAGWGLLLAGLAF), 232 to 252 (VVAFLASGSKGAAIALFLLIL), 263 to 283 (APLWGLAFLSMTVGNLAALLQ), 289 to 309 (MLAYSSVAQMGYVALALLSGG), 314 to 334 (AAAFYAVAYGAMVLAAFGALA), 359 to 379 (GVVLAVAMLALAGIPPTVGFV), 394 to 416 (APLAVIGILTAAASAYYYLRVVV), and 438 to 458 (LSLGIAALAIFILGIWPGPLF).

Belongs to the complex I subunit 2 family. In terms of assembly, NDH-1 is composed of 14 different subunits. Subunits NuoA, H, J, K, L, M, N constitute the membrane sector of the complex.

It localises to the cell inner membrane. It catalyses the reaction a quinone + NADH + 5 H(+)(in) = a quinol + NAD(+) + 4 H(+)(out). NDH-1 shuttles electrons from NADH, via FMN and iron-sulfur (Fe-S) centers, to quinones in the respiratory chain. The immediate electron acceptor for the enzyme in this species is believed to be ubiquinone. Couples the redox reaction to proton translocation (for every two electrons transferred, four hydrogen ions are translocated across the cytoplasmic membrane), and thus conserves the redox energy in a proton gradient. In Geobacter metallireducens (strain ATCC 53774 / DSM 7210 / GS-15), this protein is NADH-quinone oxidoreductase subunit N.